Here is a 122-residue protein sequence, read N- to C-terminus: Large ribosomal subunit protein uL14 (122 aa).

The protein belongs to the universal ribosomal protein uL14 family. Part of the 50S ribosomal subunit. Forms a cluster with proteins L3 and L19. In the 70S ribosome, L14 and L19 interact and together make contacts with the 16S rRNA in bridges B5 and B8.

Functionally, binds to 23S rRNA. Forms part of two intersubunit bridges in the 70S ribosome. In Borreliella burgdorferi (strain ZS7) (Borrelia burgdorferi), this protein is Large ribosomal subunit protein uL14.